The primary structure comprises 358 residues: Tripartite motif-containing protein 54 (358 aa).

Residues 26–82 (CPICLEMFSKPVVILPCQHNLCRKCANDVFQASNPLWQSRGSTTVSSGGRFRCPSCR) form an RING-type zinc finger. The segment at 121–163 (EQHLMCEEHEEEKINIYCLSCEVPTCSLCKVFGAHKDCEVAPL) adopts a B box-type zinc-finger fold. Zn(2+) is bound by residues Cys-126, His-129, Cys-149, and His-155. A mediates microtubule-binding and homooligomerization region spans residues 168 to 211 (KRQKSELSDGIAMLVAGNDRVQAVITQMEEVCQTIEDNSRRQKQ). A coiled-coil region spans residues 194 to 258 (QMEEVCQTIE…LIRQYGDHLE (65 aa)). The COS domain occupies 271 to 329 (MEEPQMALYLQQAKELINKVGAMSKVELAGRPEPGYESMEQFTVSVEHVAEMLRTIDFQ). The interval 326–358 (IDFQPGASGEEEEVAPDGDEGSAGQEEERPDGP) is disordered. Positions 334–345 (GEEEEVAPDGDE) are enriched in acidic residues.

As to quaternary structure, homooligomer and heterooligomer. Interacts with TRIM63 and probably with TRIM55. Interacts with tubulin.

Its subcellular location is the cytoplasm. The protein localises to the cytoskeleton. The protein resides in the myofibril. It localises to the sarcomere. It is found in the z line. Its function is as follows. May bind and stabilize microtubules during myotubes formation. The protein is Tripartite motif-containing protein 54 (TRIM54) of Pongo abelii (Sumatran orangutan).